Consider the following 602-residue polypeptide: Alpha-glucosides permease MPH3 (602 aa).

Residues 1-106 (MKNLSFLINR…AAAWSLLVST (106 aa)) lie on the Cytoplasmic side of the membrane. Residues 107–127 (TLIMEGYDTAILGAFYALPIF) traverse the membrane as a helical segment. The Extracellular segment spans residues 128–142 (QRKFGSQNDKTGEWE). Residues 143–163 (ISASWQIGLTLCYMAGEIVGL) traverse the membrane as a helical segment. Over 164–178 (QLTGPSVDLVGNRYT) the chain is Cytoplasmic. A helical transmembrane segment spans residues 179 to 199 (LIIALFFLAAFTFILYFCNSL). A topological domain (extracellular) is located at residue Gly-200. A helical membrane pass occupies residues 201 to 221 (MIAVGQALCGMPWGCFQCLTV). Over 222-234 (SYASEICPLALRY) the chain is Cytoplasmic. A helical membrane pass occupies residues 235–255 (YLTTYSNLCWLFGQLFAAGIM). Topologically, residues 256–270 (KNSQKKYADSELGYK) are extracellular. Residues 271-291 (LPFALQWILPVPLALGIFFAP) form a helical membrane-spanning segment. The Cytoplasmic segment spans residues 292–363 (ESPWWLVKKG…EDKINRRRTR (72 aa)). A helical transmembrane segment spans residues 364 to 384 (ITCLCWAGQATCGSILIGYST). Over 385–397 (YFYEKAGVSTEMS) the chain is Extracellular. The helical transmembrane segment at 398-418 (FTFSIIQYCLGICATFLSWWA) threads the bilayer. Topologically, residues 419 to 426 (SKYFGRYD) are cytoplasmic. The chain crosses the membrane as a helical span at residues 427–447 (LYAFGLAFQTIVFFIIGGLGC). The Extracellular segment spans residues 448 to 459 (SSTHGSKMGSGS). The chain crosses the membrane as a helical span at residues 460–480 (LLMAVAFFYNLGIAPVVFCLV). Topologically, residues 481-492 (SEMPSSRLRTKT) are cytoplasmic. Residues 493 to 513 (IILARNTYNVVSIICSVLILY) traverse the membrane as a helical segment. Residues 514 to 525 (QLNSKKWNWGAK) are Extracellular-facing. A helical membrane pass occupies residues 526–546 (SGFFWGVLCFCTLIWAVVDLP). Over 547–602 (ETAGKTFVEINELFKLGVSARKFKSTKVDPFVVKNTPKYVSHNDPKGDIEASIAEE) the chain is Cytoplasmic.

It belongs to the major facilitator superfamily. Sugar transporter (TC 2.A.1.1) family.

It is found in the cell membrane. Its function is as follows. High-affinity uptake of maltose and maltotriose. Also transports alpha-methylglucoside, glucose and turanose but not melezitose or trehalose. The polypeptide is Alpha-glucosides permease MPH3 (MPH3) (Saccharomyces cerevisiae (strain YJM789) (Baker's yeast)).